The chain runs to 157 residues: N-acetylgalactosamine-specific phosphotransferase enzyme IIB component 2 (157 aa).

Residues methionine 1–leucine 157 form the PTS EIIB type-4 domain. Residue histidine 15 is the Pros-phosphohistidine intermediate of the active site.

It localises to the cytoplasm. The phosphoenolpyruvate-dependent sugar phosphotransferase system (sugar PTS), a major carbohydrate active -transport system, catalyzes the phosphorylation of incoming sugar substrates concomitantly with their translocation across the cell membrane. This system is involved in N-acetylgalactosamine transport. This Escherichia coli (strain K12) protein is N-acetylgalactosamine-specific phosphotransferase enzyme IIB component 2 (agaV).